The primary structure comprises 673 residues: Probable potassium transport system protein Kup 1 (673 aa).

Transmembrane regions (helical) follow at residues Gly-14–Tyr-34, Leu-58–Leu-78, Trp-101–Pro-121, Leu-147–Gly-167, Phe-175–Phe-195, Gly-196–Pro-216, Ala-220–Ser-240, Val-252–Leu-272, Leu-294–Ile-314, Leu-345–Phe-365, Ala-374–Leu-394, Val-403–Ser-423, and Phe-427–Ile-447.

The protein belongs to the HAK/KUP transporter (TC 2.A.72) family.

The protein resides in the cell membrane. It catalyses the reaction K(+)(in) + H(+)(in) = K(+)(out) + H(+)(out). In terms of biological role, transport of potassium into the cell. Likely operates as a K(+):H(+) symporter. This Lactococcus lactis subsp. cremoris (strain SK11) protein is Probable potassium transport system protein Kup 1.